Reading from the N-terminus, the 425-residue chain is Trigger factor (425 aa).

The region spanning 163-248 is the PPIase FKBP-type domain; sequence GDTAVIDFEG…IHEIKTKELP (86 aa).

This sequence belongs to the FKBP-type PPIase family. Tig subfamily.

The protein resides in the cytoplasm. The catalysed reaction is [protein]-peptidylproline (omega=180) = [protein]-peptidylproline (omega=0). In terms of biological role, involved in protein export. Acts as a chaperone by maintaining the newly synthesized protein in an open conformation. Functions as a peptidyl-prolyl cis-trans isomerase. The chain is Trigger factor from Bacillus cereus (strain G9842).